Here is a 632-residue protein sequence, read N- to C-terminus: ATP-dependent zinc metalloprotease FtsH (632 aa).

Over Met1–Lys9 the chain is Cytoplasmic. Residues Pro10 to Leu30 form a helical membrane-spanning segment. Residues Arg31 to Asn116 are Periplasmic-facing. A helical membrane pass occupies residues Phe117 to Phe137. The Cytoplasmic portion of the chain corresponds to Met138–Ser632. Gly210–Thr217 is a binding site for ATP. His434 is a Zn(2+) binding site. Glu435 is an active-site residue. Residues His438 and Asp511 each coordinate Zn(2+).

It in the central section; belongs to the AAA ATPase family. The protein in the C-terminal section; belongs to the peptidase M41 family. Homohexamer. It depends on Zn(2+) as a cofactor.

Its subcellular location is the cell inner membrane. Functionally, acts as a processive, ATP-dependent zinc metallopeptidase for both cytoplasmic and membrane proteins. Plays a role in the quality control of integral membrane proteins. This Helicobacter pylori (strain J99 / ATCC 700824) (Campylobacter pylori J99) protein is ATP-dependent zinc metalloprotease FtsH.